A 578-amino-acid chain; its full sequence is Longifolene synthase (578 aa).

Mg(2+) is bound by residues Asp-331, Asp-335, and Asp-475. The DDXXD motif signature appears at 331–335 (DDLYD).

Belongs to the terpene synthase family. Tpsd subfamily. Mg(2+) serves as cofactor. It depends on Mn(2+) as a cofactor.

It carries out the reaction (2E,6E)-farnesyl diphosphate = longifolene + diphosphate. It participates in sesquiterpene biosynthesis. It functions in the pathway terpene metabolism; oleoresin biosynthesis. Its function is as follows. Terpene synthase (TPS) involved in the biosynthesis of sesquiterpene natural products included in conifer oleoresin secretions and volatile emissions; these compounds contribute to biotic and abiotic stress defense against herbivores and pathogens. Catalyzes the conversion of (2E,6E)-farnesyl diphosphate (FPP) to longifolene. The protein is Longifolene synthase of Picea engelmannii x Picea glauca (Hybrid white spruce).